We begin with the raw amino-acid sequence, 129 residues long: Large ribosomal subunit protein bL21 (129 aa).

It belongs to the bacterial ribosomal protein bL21 family. Part of the 50S ribosomal subunit. Contacts protein L20.

This protein binds to 23S rRNA in the presence of protein L20. This chain is Large ribosomal subunit protein bL21, found in Prochlorococcus marinus (strain MIT 9313).